A 233-amino-acid polypeptide reads, in one-letter code: uncharacterized protein (233 aa).

6 helical membrane-spanning segments follow: residues 7–27 (VPIFIAILSFIVMCIGELLAY), 36–56 (YEFEAISFGFIFGVATLILIP), 62–82 (MFVLYVILGMITVYLIEKYLA), 119–139 (LIIAVSYISEIGLPLYLAILM), 159–179 (PLYPGVFVSFGTVLGTIVGLV), and 188–208 (ILLAFSGGVFLGAFLMLAPHI).

The protein resides in the cell membrane. This is an uncharacterized protein from Methanocaldococcus jannaschii (strain ATCC 43067 / DSM 2661 / JAL-1 / JCM 10045 / NBRC 100440) (Methanococcus jannaschii).